The following is a 125-amino-acid chain: Large ribosomal subunit protein bL20 (125 aa).

This sequence belongs to the bacterial ribosomal protein bL20 family.

Its function is as follows. Binds directly to 23S ribosomal RNA and is necessary for the in vitro assembly process of the 50S ribosomal subunit. It is not involved in the protein synthesizing functions of that subunit. In Methylobacterium radiotolerans (strain ATCC 27329 / DSM 1819 / JCM 2831 / NBRC 15690 / NCIMB 10815 / 0-1), this protein is Large ribosomal subunit protein bL20.